The following is a 166-amino-acid chain: 2-amino-4-hydroxy-6-hydroxymethyldihydropteridine pyrophosphokinase (166 aa).

Belongs to the HPPK family.

The enzyme catalyses 6-hydroxymethyl-7,8-dihydropterin + ATP = (7,8-dihydropterin-6-yl)methyl diphosphate + AMP + H(+). Its pathway is cofactor biosynthesis; tetrahydrofolate biosynthesis; 2-amino-4-hydroxy-6-hydroxymethyl-7,8-dihydropteridine diphosphate from 7,8-dihydroneopterin triphosphate: step 4/4. Catalyzes the transfer of pyrophosphate from adenosine triphosphate (ATP) to 6-hydroxymethyl-7,8-dihydropterin, an enzymatic step in folate biosynthesis pathway. This Streptococcus pyogenes serotype M1 protein is 2-amino-4-hydroxy-6-hydroxymethyldihydropteridine pyrophosphokinase (folK).